We begin with the raw amino-acid sequence, 112 residues long: Large ribosomal subunit protein P2-B (112 aa).

The disordered stretch occupies residues 89 to 112 (APAAADAKKEEEEEDDDMGFGLFD).

This sequence belongs to the eukaryotic ribosomal protein P1/P2 family. P1 and P2 exist as dimers at the large ribosomal subunit. Phosphorylated.

In terms of biological role, plays an important role in the elongation step of protein synthesis. The chain is Large ribosomal subunit protein P2-B from Trypanosoma cruzi.